The chain runs to 393 residues: Putative odorant receptor 69a, isoform B (393 aa).

Topologically, residues 1 to 39 are cytoplasmic; that stretch reads MQLEDFMRYPDLVCQAAQLPRYTWNGRRSLEVKRNLAKR. A helical membrane pass occupies residues 40 to 60; it reads IIFWLGAVNLVYHNIGCVMYG. At 61-69 the chain is on the extracellular side; sequence YFGDGRTKD. The chain crosses the membrane as a helical span at residues 70-90; that stretch reads PIAYLAELASVASMLGFTIVG. The Cytoplasmic segment spans residues 91-138; sequence TLNLWKMLSLKTHFENLLNEFEELFQLIKHRAYRIHHYQEKYTRHIRN. The chain crosses the membrane as a helical span at residues 139-159; the sequence is TFIFHTSAVVYYNSLPILLMI. The Extracellular portion of the chain corresponds to 160 to 208; the sequence is REHFSNSQQLGYRIQSNTWYPWQVQGSIPGFFAAVACQIFSCQTNMCVN. The helical transmembrane segment at 209-229 threads the bilayer; sequence MFIQFLINFFGIQLEIHFDGL. The Cytoplasmic portion of the chain corresponds to 230-269; it reads ARQLETIDARNPHAKDQLKYLIVYHTKLLNLADRVNRSFN. Residues 270 to 290 form a helical membrane-spanning segment; it reads FTFLISLSVSMISNCFLAFSM. The Extracellular portion of the chain corresponds to 291-305; the sequence is TMFDFGTSLKHLLGL. The chain crosses the membrane as a helical span at residues 306-326; the sequence is LLFITYNFSMCRSGTHLILTS. The Cytoplasmic portion of the chain corresponds to 327-365; the sequence is GKVLPAAFYNNWYEGDLVYRRMLLILMMRATKPYMWKTY. A helical transmembrane segment spans residues 366–386; it reads KLAPVSITTYMATLKFSYQMF. Residues 387–393 are Extracellular-facing; it reads TCVRSLK.

This sequence belongs to the insect chemoreceptor superfamily. Heteromeric odorant receptor channel (TC 1.A.69) family. Or49a subfamily. In terms of assembly, interacts with Orco. Complexes exist early in the endomembrane system in olfactory sensory neurons (OSNs), coupling these complexes to the conserved ciliary trafficking pathway. In terms of tissue distribution, expressed in olfactory sensory neurons in the antenna.

The protein localises to the cell membrane. Odorant receptor which mediates acceptance or avoidance behavior, depending on its substrates. The odorant receptor repertoire encodes a large collection of odor stimuli that vary widely in identity, intensity, and duration. May form a complex with Orco to form odorant-sensing units, providing sensitive and prolonged odorant signaling and calcium permeability. The chain is Putative odorant receptor 69a, isoform B (Or69a) from Drosophila melanogaster (Fruit fly).